Reading from the N-terminus, the 330-residue chain is Diacylglycerol acyltransferase/mycolyltransferase Ag85A (330 aa).

A signal peptide spans 1–42; that stretch reads MKFVDRFRGAVAGMLRRLVVEAMGVALLSALIGVVGSAPAEA. Substrate is bound at residue 84–85; sequence LR. The tract at residues 100–110 is fibronectin-binding; that stretch reads FEWYYQSGISV. Cysteine 129 and cysteine 134 are joined by a disulfide. Positions 168 and 196 each coordinate substrate. Residue serine 168 is the Nucleophile of the active site. Glutamate 272 is a catalytic residue. Residues 274–277, lysine 281, and 304–306 each bind substrate; these read LVRT and HSW. Histidine 304 is an active-site residue.

This sequence belongs to the mycobacterial A85 antigen family. Homodimer.

It is found in the secreted. The protein resides in the cell wall. The protein localises to the cytoplasm. The enzyme catalyses an acyl-CoA + a 1,2-diacyl-sn-glycerol = a triacyl-sn-glycerol + CoA. It carries out the reaction 2 alpha,alpha'-trehalose 6-mycolate = alpha,alpha'-trehalose 6,6'-bismycolate + alpha,alpha-trehalose. The antigen 85 proteins (FbpA, FbpB, FbpC) are responsible for the high affinity of mycobacteria for fibronectin, a large adhesive glycoprotein, which facilitates the attachment of M.tuberculosis to murine alveolar macrophages (AMs). They also help to maintain the integrity of the cell wall by catalyzing the transfer of mycolic acids to cell wall arabinogalactan, and through the synthesis of alpha,alpha-trehalose dimycolate (TDM, cord factor). They catalyze the transfer of a mycoloyl residue from one molecule of alpha,alpha-trehalose monomycolate (TMM) to another TMM, leading to the formation of TDM. FbpA mediates triacylglycerol (TAG) formation with long-chain acyl-CoA as the acyl donor and 1,2-dipalmitoyl-sn-glycerol (1,2-dipalmitin) as the acyl acceptor. It has a preference for C26:0-CoA over C18:1-CoA. This is Diacylglycerol acyltransferase/mycolyltransferase Ag85A (fbpA) from Mycobacterium leprae (strain TN).